A 242-amino-acid polypeptide reads, in one-letter code: GDSL esterase/lipase At5g62930 (242 aa).

Residue serine 11 is the Nucleophile of the active site. The tract at residues 223 to 242 (PHHSHIDGKNPSKAFEERCL) is disordered.

Belongs to the 'GDSL' lipolytic enzyme family.

The protein is GDSL esterase/lipase At5g62930 of Arabidopsis thaliana (Mouse-ear cress).